Here is a 379-residue protein sequence, read N- to C-terminus: L-lactate dehydrogenase (379 aa).

The 379-residue stretch at 1 to 379 (MIISASTDYR…ITSDLLVKER (379 aa)) folds into the FMN hydroxy acid dehydrogenase domain. Tyrosine 24 lines the substrate pocket. FMN contacts are provided by serine 106 and glutamine 127. Tyrosine 129 contributes to the substrate binding site. Threonine 155 is an FMN binding site. Substrate is bound at residue arginine 164. Residue lysine 251 coordinates FMN. Histidine 275 functions as the Proton acceptor in the catalytic mechanism. Arginine 278 is a substrate binding site. An FMN-binding site is contributed by 306–330 (DSGIRTGLDVVRMLALGADTVLLGR).

It belongs to the FMN-dependent alpha-hydroxy acid dehydrogenase family. Homotetramer. FMN serves as cofactor.

The protein localises to the cell inner membrane. It carries out the reaction (S)-lactate + A = pyruvate + AH2. Catalyzes the conversion of L-lactate to pyruvate. Is coupled to the respiratory chain. This Ectopseudomonas mendocina (strain ymp) (Pseudomonas mendocina) protein is L-lactate dehydrogenase.